A 198-amino-acid polypeptide reads, in one-letter code: NADH-quinone oxidoreductase subunit C (198 aa).

It belongs to the complex I 30 kDa subunit family. As to quaternary structure, NDH-1 is composed of 14 different subunits. Subunits NuoB, C, D, E, F, and G constitute the peripheral sector of the complex.

It is found in the cell inner membrane. The enzyme catalyses a quinone + NADH + 5 H(+)(in) = a quinol + NAD(+) + 4 H(+)(out). NDH-1 shuttles electrons from NADH, via FMN and iron-sulfur (Fe-S) centers, to quinones in the respiratory chain. The immediate electron acceptor for the enzyme in this species is believed to be ubiquinone. Couples the redox reaction to proton translocation (for every two electrons transferred, four hydrogen ions are translocated across the cytoplasmic membrane), and thus conserves the redox energy in a proton gradient. The polypeptide is NADH-quinone oxidoreductase subunit C (Janthinobacterium sp. (strain Marseille) (Minibacterium massiliensis)).